A 149-amino-acid chain; its full sequence is Cyanate hydratase (149 aa).

Catalysis depends on residues R90, E93, and S116.

The protein belongs to the cyanase family.

The enzyme catalyses cyanate + hydrogencarbonate + 3 H(+) = NH4(+) + 2 CO2. Its function is as follows. Catalyzes the reaction of cyanate with bicarbonate to produce ammonia and carbon dioxide. This chain is Cyanate hydratase, found in Aquifex aeolicus (strain VF5).